A 2452-amino-acid chain; its full sequence is Lovastatin diketide synthase lovF (2452 aa).

The region spanning 10-381 (PAPIAVVGMG…GANAHAIVER (372 aa)) is the Ketosynthase family 3 (KS3) domain. Active-site for beta-ketoacyl synthase activity residues include C173, H308, and H343. The segment at 496–790 (VFTGQGAQWF…PYLSCLSRGK (295 aa)) is malonyl-CoA:ACP transacylase (MAT) domain. S555 acts as the For malonyltransferase activity in catalysis. Residues 861–998 (HDLIGLQEPL…GLVRVDMDQP (138 aa)) form an N-terminal hotdog fold region. Residues 861–1166 (HDLIGLQEPL…LEGLVFQSLG (306 aa)) form a dehydratase (DH) domain region. Positions 861–1171 (HDLIGLQEPL…FQSLGASLGT (311 aa)) constitute a PKS/mFAS DH domain. H893 functions as the Proton acceptor; for dehydratase activity in the catalytic mechanism. The disordered stretch occupies residues 997–1017 (QPASSLSNPQRADPRPWSRKT). Residues 1012–1171 (PWSRKTAPQD…FQSLGASLGT (160 aa)) form a C-terminal hotdog fold region. Residue D1079 is the Proton donor; for dehydratase activity of the active site. Positions 1343–1528 (ELVRLCCHKN…RDCDSDEFYM (186 aa)) are methyltransferase (CMet) domain. The tract at residues 1745–2064 (GLLDSLYFRK…SGQHVGKIVV (320 aa)) is enoylreductase (ER) domain. The tract at residues 2088 to 2260 (SYLVAGGLGG…AVTIDLGMVQ (173 aa)) is ketoreductase (KR) domain. Positions 2373–2450 (ASIAVIMEAM…KVAEVVLQRY (78 aa)) constitute a Carrier domain. S2410 carries the O-(pantetheine 4'-phosphoryl)serine modification.

As to quaternary structure, interacts with LovD. Pantetheine 4'-phosphate is required as a cofactor.

It carries out the reaction holo-[2-methylbutanoate polyketide synthase] + 2 malonyl-CoA + S-adenosyl-L-methionine + 2 NADPH + 3 H(+) = (S)-2-methylbutanoyl-[2-methylbutanoate polyketide synthase] + S-adenosyl-L-homocysteine + 2 CO2 + 2 NADP(+) + 2 CoA + H2O. The protein operates within polyketide biosynthesis; lovastatin biosynthesis. Functionally, lovastatin diketide synthase; part of the gene cluster that mediates the biosynthesis of lovastatin (also known as mevinolin, mevacor or monacolin K), a hypolipidemic inhibitor of (3S)-hydroxymethylglutaryl-coenzyme A (HMG-CoA) reductase (HMGR). The first step in the biosynthesis of lovastatin is the production of dihydromonacolin L acid by the lovastatin nonaketide synthase lovB and the trans-acting enoyl reductase lovC via condensation of one acetyl-CoA unit and 8 malonyl-CoA units. Dihydromonacolin L acid is released from lovB by the thioesterase lovG. Next, dihydromonacolin L acid is oxidized by the dihydromonacolin L monooxygenase lovA twice to form monacolin J acid. The 2-methylbutyrate moiety of lovastatin is synthesized by the lovastatin diketide synthase lovF via condensation of one acetyl-CoA unit and one malonyl-CoA unit. Finally, the covalent attachment of this moiety to monacolin J acid is catalyzed by the transesterase lovD to yield lovastatin. LovD has broad substrate specificity and can also convert monacolin J to simvastatin using alpha-dimethylbutanoyl-S-methyl-3-mercaptopropionate (DMB-S-MMP) as the thioester acyl donor, and can also catalyze the reverse reaction and function as hydrolase in vitro. LovD has much higher activity with LovF-bound 2-methylbutanoate than with free diketide substrates. The sequence is that of Lovastatin diketide synthase lovF from Aspergillus terreus (strain NIH 2624 / FGSC A1156).